Reading from the N-terminus, the 466-residue chain is UPF0652 protein C16A11.03c (466 aa).

The protein belongs to the UPF0652 family.

It localises to the cytoplasm. The protein resides in the nucleus. The protein is UPF0652 protein C16A11.03c of Schizosaccharomyces pombe (strain 972 / ATCC 24843) (Fission yeast).